Consider the following 426-residue polypeptide: Zinc finger CCCH domain-containing protein 15 (426 aa).

The segment covering M1–S12 has biased composition (low complexity). Disordered stretches follow at residues M1 to G30 and G53 to K74. A compositionally biased stretch (basic and acidic residues) spans K13–F29. Over residues G53 to Q62 the composition is skewed to polar residues. The stretch at A61 to K86 forms a coiled coil. Residues E64–K74 are compositionally biased toward basic and acidic residues. 2 C3H1-type zinc fingers span residues D99 to T126 and P174 to P212. Residues K218–K285 are a coiled coil. Position 231 is a phosphoserine (S231). Positions I236–K260 are required for interaction with DRG1. Positions P299–S326 are disordered. S351, S360, and S381 each carry phosphoserine. The interval Y358–D411 is disordered.

The protein belongs to the ZC3H15/TMA46 family. In terms of assembly, interacts with DRG1; this interaction prevents DRG1 poly-ubiquitination and degradation by proteasome. DRG1-ZC3H15/DFRP1 complex co-sediments with polysomes. Associates with microtubules.

The protein resides in the cytoplasm. Its subcellular location is the nucleus. Functionally, protects DRG1 from proteolytic degradation. Stimulates DRG1 GTPase activity likely by increasing the affinity for the potassium ions. This Homo sapiens (Human) protein is Zinc finger CCCH domain-containing protein 15 (ZC3H15).